The primary structure comprises 273 residues: Vacuolar iron transporter (273 aa).

Over 1–47 the chain is Cytoplasmic; the sequence is MGKQKIIDARKAYYEGDIEKSKEIHSHYHNLDKHAEHHSLDKDHLKT. Residues 48-68 traverse the membrane as a helical segment; the sequence is IIFGSLDGIITIFAIVSGCVG. The Vacuolar portion of the chain corresponds to 69-72; sequence ANIT. A helical membrane pass occupies residues 73 to 93; it reads PAQVIIIGVGNLFANAISMGF. The Cytoplasmic segment spans residues 94–181; that stretch reads SEYTSSTAQI…NEDKSEAFKK (88 aa). Residues Glu-113, Glu-116, Glu-124, Glu-127, Met-161, and Glu-165 each coordinate Fe cation. Residues 182–202 form a helical membrane-spanning segment; the sequence is GILMFLSFCFFGMIPLFSYVL. The Vacuolar segment spans residues 203–212; that stretch reads YNLFFSAENY. A helical membrane pass occupies residues 213-233; sequence TSSFAVVFISTLITLFILGLF. The Cytoplasmic portion of the chain corresponds to 234-246; the sequence is KSQFTTQKPIVCA. A helical membrane pass occupies residues 247–267; that stretch reads LSMVLNGSIAGMLPFLFGVLL. At 268-273 the chain is on the vacuolar side; sequence KTNSGD.

Belongs to the CCC1 family. Monomer.

The protein localises to the vacuole membrane. It localises to the endoplasmic reticulum membrane. The catalysed reaction is Fe(2+)(in) = Fe(2+)(out). In terms of biological role, vacuolar iron transporter involved in the transfer of iron ions from the cytosol to the vacuole for intracellular iron storage. Involved in detoxification of excess iron. The transport mechanism is not well defined and the role of protons is not clear. The chain is Vacuolar iron transporter from Plasmodium berghei (strain Anka).